We begin with the raw amino-acid sequence, 141 residues long: Large ribosomal subunit protein bL17 (141 aa).

It belongs to the bacterial ribosomal protein bL17 family. Part of the 50S ribosomal subunit. Contacts protein L32.

The protein is Large ribosomal subunit protein bL17 of Rhizobium meliloti (strain 1021) (Ensifer meliloti).